The sequence spans 355 residues: Beta-ketoacyl-[acyl-carrier-protein] synthase III (355 aa).

Catalysis depends on residues cysteine 122 and histidine 280. The segment at glutamine 281–arginine 285 is ACP-binding. Residue asparagine 311 is part of the active site.

Belongs to the thiolase-like superfamily. FabH family. Homodimer.

It localises to the cytoplasm. It carries out the reaction malonyl-[ACP] + acetyl-CoA + H(+) = 3-oxobutanoyl-[ACP] + CO2 + CoA. It participates in lipid metabolism; fatty acid biosynthesis. Functionally, catalyzes the condensation reaction of fatty acid synthesis by the addition to an acyl acceptor of two carbons from malonyl-ACP. Catalyzes the first condensation reaction which initiates fatty acid synthesis and may therefore play a role in governing the total rate of fatty acid production. Possesses both acetoacetyl-ACP synthase and acetyl transacylase activities. Its substrate specificity determines the biosynthesis of branched-chain and/or straight-chain of fatty acids. The polypeptide is Beta-ketoacyl-[acyl-carrier-protein] synthase III (Kocuria rhizophila (strain ATCC 9341 / DSM 348 / NBRC 103217 / DC2201)).